A 433-amino-acid polypeptide reads, in one-letter code: Transcription factor elt-2 (433 aa).

Disordered regions lie at residues 1–47 and 194–235; these read MDNN…ELPR and GQPP…RQGL. Polar residues predominate over residues 27 to 43; that stretch reads PTQNMDPPEQNNESQLS. Low complexity predominate over residues 211–234; the sequence is AKQSSKKSSSSNRGSNGSASRRQG. The GATA-type zinc-finger motif lies at 237 to 261; that stretch reads CSNCNGTNTTLWRRNAEGDPVCNAC. Positions 275 to 332 are disordered; sequence SMKKEGALQTRKRKSKSGDSSTPSTSRARERKFERASSSTEKAQRSSNRRAGSAKADR. Positions 310–324 are enriched in polar residues; sequence ASSSTEKAQRSSNRR.

Interacts with lag-1. Interacts with pha-4. Interacts with rpt-6. Post-translationally, may be ubiquitinated in response to infection by B.pseudomallei. Expressed in the intestine.

It localises to the nucleus. In terms of biological role, transcriptional activator that binds to the consensus sequence 5'-[AT]GATA[AG]-3'. Predominantly directs the transcription of intestinal genes such as ges-1, cpr-6, pho-1, ftn-1, vit-2 and lev-11, and itself. Required for gut-specific differentiation, specifically acting with the GATA region-binding transcription factor elt-7 to control normal gene expression and promote normal formation of the intestine. Regulates intestinal gene expression in response to hypoxia to promote longevity. Modulation of longevity may, in part, be the result of regulation of expression of daf-16 isoforms d and f in the intestine. Regulates tissue specific gene expression at basal levels and in response to bacterial infection in the intestine to control innate immunity. Plays a role in the induction of metal-responsive genes, activating gene expression from zinc-activated promoters and iron-dependent promoters and enhancers. May regulate the expression of genes that control sensitivity to oxidative stress, in a mab-3-dependent manner, and osmotic stress, in conjunction with the GATA region-binding transcription factor elt-3. May play a role in sphingolipid signaling by regulating the expression of the sphingosine-1-phosphate degrading enzyme, sphingosine-1-phosphate lyase. May act with the Notch signaling pathway to promote endodermal gene expression. Has a protective role in response to infection by Gram-negative bacteria such as S.enterica, E.coli, P.aeruginosa and B.pseudomallei, Gram-positive bacterium E.faecalis and fungal pathogen C.neoformans. An association with the 26S proteasome regulatory subunit rpt-6, in part, controls gene expression in response to infection by P.aeruginosa. Regulates gene expression during the recovery phase following a bacterial infection. May act with p38-activated transcription factors to control p38 gene induction in response to bacterial infection. Controls lysosome formation in the intestine by controlling lysosomal gene expression. This is Transcription factor elt-2 from Caenorhabditis elegans.